The primary structure comprises 452 residues: Probable 1,4-beta-D-glucan cellobiohydrolase A (452 aa).

Residues Met1–Ala17 form the signal peptide. An N-linked (GlcNAc...) asparagine glycan is attached at Asn62. The active-site Nucleophile is Glu227. The active-site Proton donor is Glu232. Residues Asn285, Asn335, Asn402, and Asn445 are each glycosylated (N-linked (GlcNAc...) asparagine).

Belongs to the glycosyl hydrolase 7 (cellulase C) family.

It localises to the secreted. It carries out the reaction Hydrolysis of (1-&gt;4)-beta-D-glucosidic linkages in cellulose and cellotetraose, releasing cellobiose from the non-reducing ends of the chains.. Functionally, the biological conversion of cellulose to glucose generally requires three types of hydrolytic enzymes: (1) Endoglucanases which cut internal beta-1,4-glucosidic bonds; (2) Exocellobiohydrolases that cut the disaccharide cellobiose from the non-reducing end of the cellulose polymer chain; (3) Beta-1,4-glucosidases which hydrolyze the cellobiose and other short cello-oligosaccharides to glucose. The chain is Probable 1,4-beta-D-glucan cellobiohydrolase A (cbhA) from Aspergillus niger (strain ATCC MYA-4892 / CBS 513.88 / FGSC A1513).